Consider the following 154-residue polypeptide: Egg-lysin (154 aa).

A signal peptide spans methionine 1–serine 18.

Homodimer. Sperm.

Its function is as follows. Dissolves the egg vitelline layer nonenzymatically during fertilization. It creates a hole of about 3 mu-m in diameter through which the sperm pass. This is Egg-lysin from Haliotis kamtschatkana (Pinto abalone).